The primary structure comprises 239 residues: Carboxy-S-adenosyl-L-methionine synthase (239 aa).

Residues Tyr35, 64-66 (GCS), 88-89 (DN), and Arg195 each bind S-adenosyl-L-methionine.

The protein belongs to the class I-like SAM-binding methyltransferase superfamily. Cx-SAM synthase family. In terms of assembly, homodimer.

It carries out the reaction prephenate + S-adenosyl-L-methionine = carboxy-S-adenosyl-L-methionine + 3-phenylpyruvate + H2O. Its function is as follows. Catalyzes the conversion of S-adenosyl-L-methionine (SAM) to carboxy-S-adenosyl-L-methionine (Cx-SAM). The polypeptide is Carboxy-S-adenosyl-L-methionine synthase (Helicobacter pylori (strain Shi470)).